A 240-amino-acid polypeptide reads, in one-letter code: Lysoplasmalogenase TMEM86A (240 aa).

At 1-21 the chain is on the cytoplasmic side; that stretch reads MVSPVTVVKSEGPKLVPFFKA. A helical transmembrane segment spans residues 22–42; the sequence is TCVYFVLWLPSSSPSWVSTLI. Residue Lys-43 is a topological domain, extracellular. Residues 44–64 traverse the membrane as a helical segment; that stretch reads CLPIFCLWLFLLAHGLGFLLA. Residues 65 to 70 lie on the Cytoplasmic side of the membrane; that stretch reads HPSATR. Residues 71–91 traverse the membrane as a helical segment; it reads IFVGLVFSAVGDAFLIWQDQG. Tyr-92 is a topological domain (extracellular). The helical transmembrane segment at 93-113 threads the bilayer; that stretch reads FVHGLLMFAVTHMFYASAFGM. Residues 114-115 lie on the Cytoplasmic side of the membrane; that stretch reads QP. Residues 116–136 form a helical membrane-spanning segment; it reads LALRTGLVMAALSGLCYALLY. Topologically, residues 137-138 are extracellular; it reads PC. A helical membrane pass occupies residues 139–159; the sequence is LSGAFTYLVGVYVALIGFMGW. The Cytoplasmic segment spans residues 160 to 174; the sequence is RAMAGLRLAGADWRW. A helical membrane pass occupies residues 175-195; sequence TELAAGSGALFFIISDLTIAL. At 196 to 206 the chain is on the extracellular side; sequence NKFCFPVPYSR. Residues 207-227 form a helical membrane-spanning segment; the sequence is ALIMSTYYVAQMLVALSAVES. The Cytoplasmic segment spans residues 228-240; that stretch reads REPVEHYRLTKAN.

The protein belongs to the TMEM86 family. As to expression, expressed in the macrophages.

Its subcellular location is the endoplasmic reticulum membrane. The catalysed reaction is a 1-O-(1Z-alkenyl)-sn-glycero-3-phosphocholine + H2O = a 2,3-saturated aldehyde + sn-glycerol 3-phosphocholine. The enzyme catalyses a 1-O-(1Z-alkenyl)-sn-glycero-3-phosphoethanolamine + H2O = a 2,3-saturated aldehyde + sn-glycero-3-phosphoethanolamine. Functionally, catalyzes the hydrolysis of the vinyl ether bond of choline or ethanolamine lysoplasmalogens, forming fatty aldehyde and glycerophosphocholine or glycerophosphoethanolamine, respectively and is specific for the sn-2-deacylated (lyso) form of plasmalogen. Plays an important role in lysoplasmalogen metabolism in the adipocyte tissue and macrophages. The sequence is that of Lysoplasmalogenase TMEM86A (TMEM86A) from Homo sapiens (Human).